The primary structure comprises 80 residues: Type VII secretion system accessory factor EsaB (80 aa).

Belongs to the EsaB family.

It is found in the cytoplasm. In terms of biological role, seems to regulate secreted factors that contribute to the establishment of persistent infections in the host. The protein is Type VII secretion system accessory factor EsaB of Staphylococcus aureus (strain COL).